The sequence spans 118 residues: Large ribosomal subunit protein uL18 (118 aa).

This sequence belongs to the universal ribosomal protein uL18 family. As to quaternary structure, part of the 50S ribosomal subunit; part of the 5S rRNA/L5/L18/L25 subcomplex. Contacts the 5S and 23S rRNAs.

Functionally, this is one of the proteins that bind and probably mediate the attachment of the 5S RNA into the large ribosomal subunit, where it forms part of the central protuberance. This Zymomonas mobilis subsp. mobilis (strain ATCC 31821 / ZM4 / CP4) protein is Large ribosomal subunit protein uL18.